A 381-amino-acid chain; its full sequence is MRGFVVLLAVFALSQASGIVRIPLHKGKSLRRALKERGLLEDFLKNHQHAVSRKHSNSREVASEFLTNYLDCQYFGKIYIGTPPQEFTVVFDTGSSDLWVPSVYCNSVACQNHHRFDPSKSSTFQNMDKSLSIQYGTGSMQGLLGYDTVTVSSIVDPHQTVGLSTQEPGDVFTYSEFDGILGLAYPSLASEYSVPVFDNMMDRHLVAQDLFSVYMSRNEQGSMLTLGAIDPSYYTGSLHWIPVTVQEYWQFTVDSVTVDGVVVACDGGCQAILDTGTSMLVGPGSDIFNIQQAIGATEGQYGEFDIDCGTLSSMPTVVFEINGKKYPLPPSAYTNQDQGFCTSGFQGDDSSQQWILGDVFIREYYSVFDRASNLVGLAKAI.

A signal peptide spans 1-16 (MRGFVVLLAVFALSQA). Positions 17–58 (SGIVRIPLHKGKSLRRALKERGLLEDFLKNHQHAVSRKHSNS) are cleaved as a propeptide — activation peptide. In terms of domain architecture, Peptidase A1 spans 74–378 (YFGKIYIGTP…DRASNLVGLA (305 aa)). The active site involves D92. Repeat unit 1 spans residues 92–102 (DTGSSDLWVPS). 2 disulfide bridges follow: C105–C110 and C265–C269. Residue D274 is part of the active site. Residues 274–284 (DTGTSMLVGPG) form repeat 2. C308 and C341 are oxidised to a cystine.

It belongs to the peptidase A1 family. Monomer.

It catalyses the reaction Broad specificity similar to that of pepsin A. Clots milk by cleavage of a single 104-Ser-Phe-|-Met-Ala-107 bond in kappa-chain of casein.. Its activity is regulated as follows. Inhibited by pepstatin. Hydrolyzes a variety of proteins. The sequence is that of Chymosin (CYM) from Callithrix jacchus (White-tufted-ear marmoset).